Reading from the N-terminus, the 415-residue chain is Levansucrase (415 aa).

5 residues coordinate sucrose: tryptophan 45, aspartate 46, alanine 132, arginine 202, and aspartate 203. The Nucleophile role is filled by aspartate 46. Residue glutamate 287 is the Proton donor/acceptor of the active site.

The protein belongs to the glycosyl hydrolase 68 family.

It is found in the secreted. The catalysed reaction is [6)-beta-D-fructofuranosyl-(2-&gt;](n) alpha-D-glucopyranoside + sucrose = [6)-beta-D-fructofuranosyl-(2-&gt;](n+1) alpha-D-glucopyranoside + D-glucose. In terms of biological role, catalyzes the synthesis of levan, a fructose polymer, by transferring the fructosyl moiety from sucrose to a growing acceptor molecule. This Erwinia amylovora (Fire blight bacteria) protein is Levansucrase.